Reading from the N-terminus, the 132-residue chain is UPF0357 protein YCL012C (132 aa).

An N-terminal signal peptide occupies residues 1-25 (MWDLFYFKVFFWVVLISLCIFMVHR).

It belongs to the UPF0357 family.

The protein is UPF0357 protein YCL012C (YCL012C) of Saccharomyces bayanus (Yeast).